Consider the following 226-residue polypeptide: Thioredoxin domain-containing protein 9 (226 aa).

The region spanning 52 to 180 (LEALKKAQQQ…TTETLEWRLG (129 aa)) is the Thioredoxin domain. A phosphoserine mark is found at serine 188, serine 221, and serine 223.

Forms ternary complexes with the chaperonin TCP1 complex, spanning the cylindrical chaperonin cavity and contacting at least 2 subunits.

The protein resides in the cytoplasm. The protein localises to the nucleus. It localises to the cytoskeleton. Its subcellular location is the microtubule organizing center. It is found in the centrosome. The protein resides in the midbody. Functionally, significantly diminishes the chaperonin TCP1 complex ATPase activity, thus negatively impacts protein folding, including that of actin or tubulin. This is Thioredoxin domain-containing protein 9 (TXNDC9) from Bos taurus (Bovine).